We begin with the raw amino-acid sequence, 589 residues long: Serine/threonine-protein phosphatase 2A 65 kDa regulatory subunit A alpha isoform (589 aa).

The residue at position 2 (Ala-2) is an N-acetylalanine. HEAT repeat units lie at residues 8–46 (DSLY…GVER), 47–84 (TRSE…GGPE), 85–123 (YVHC…SPSD), 124–161 (LEAH…VSSA), 162–200 (VKAE…ELDN), 201–239 (VKSE…PQED), 240–278 (LEAL…GPEI), 279–321 (TKTD…RENV), 322–360 (IMTQ…GKDN), 361–399 (TIEH…GIRQ), 400–438 (LSQS…GVEF), 439–477 (FDEK…GKEW), 478–516 (AHAT…GQDI), 517–555 (TTKH…DNST), and 556–589 (LQSE…LSLA). Residue Lys-280 is modified to N6-acetyllysine.

The protein belongs to the phosphatase 2A regulatory subunit A family. In terms of assembly, PP2A consists of a common heterodimeric core enzyme, composed of PPP2CA a 36 kDa catalytic subunit (subunit C) and PPP2R1A a 65 kDa constant regulatory subunit (PR65 or subunit A), that associates with a variety of regulatory subunits. Proteins that associate with the core dimer include three families of regulatory subunits B (the R2/B/PR55/B55, R3/B''/PR72/PR130/PR59 and R5/B'/B56 families), the 48 kDa variable regulatory subunit, viral proteins, and cell signaling molecules. Found in a complex with at least ARL2, PPP2CB, PPP2R1A, PPP2R2A, PPP2R5E and TBCD. Interacts with the PP2A C catalytic subunit PPP2CA. Interacts with the PP2A B subunit PPP2R2A. Interacts with the PP2A B subunit PPP2R5D. Interacts with FOXO1; the interaction dephosphorylates FOXO1 on AKT-mediated phosphorylation sites. Interacts with IPO9. Interacts with TP53 and SGO1. Interacts with PLA2G16; this interaction might decrease PP2A activity. Interacts with CTTNBP2NL. Interacts with GNA12; the interaction promotes protein phosphatase 2A activation causing dephosphorylation of MAPT. Interacts with CIP2A; this interaction stabilizes CIP2A. Interacts with PABIR1/FAM122A. Interacts with ADCY8; antagonizes interaction between ADCY8 and calmodulin. Interacts with CRTC3 (when phosphorylated at 'Ser-391'). Interacts with SPRY2. Part of the core of STRIPAK complexes composed of PP2A catalytic and scaffolding subunits, the striatins (PP2A regulatory subunits), the striatin-associated proteins MOB4, STRIP1 and STRIP2, PDCD10 and members of the STE20 kinases, such as STK24 and STK26. Component of the Integrator-PP2A (INTAC) complex, composed of the Integrator core complex and protein phosphatase 2A subunits PPP2CA and PPP2R1A.

It localises to the cytoplasm. The protein resides in the nucleus. Its subcellular location is the chromosome. The protein localises to the centromere. It is found in the lateral cell membrane. It localises to the cell projection. The protein resides in the dendrite. Functionally, the PR65 subunit of protein phosphatase 2A serves as a scaffolding molecule to coordinate the assembly of the catalytic subunit and a variable regulatory B subunit. Upon interaction with GNA12 promotes dephosphorylation of microtubule associated protein TAU/MAPT. Required for proper chromosome segregation and for centromeric localization of SGO1 in mitosis. Together with RACK1 adapter, mediates dephosphorylation of AKT1 at 'Ser-473', preventing AKT1 activation and AKT-mTOR signaling pathway. Dephosphorylation of AKT1 is essential for regulatory T-cells (Treg) homeostasis and stability. Part of the striatin-interacting phosphatase and kinase (STRIPAK) complexes. STRIPAK complexes have critical roles in protein (de)phosphorylation and are regulators of multiple signaling pathways including Hippo, MAPK, nuclear receptor and cytoskeleton remodeling. Different types of STRIPAK complexes are involved in a variety of biological processes such as cell growth, differentiation, apoptosis, metabolism and immune regulation. Key mediator of a quality checkpoint during transcription elongation as part of the Integrator-PP2A (INTAC) complex. The INTAC complex drives premature transcription termination of transcripts that are unfavorably configured for transcriptional elongation: within the INTAC complex, acts as a scaffolding subunit for PPP2CA, which catalyzes dephosphorylation of the C-terminal domain (CTD) of Pol II subunit POLR2A/RPB1 and SUPT5H/SPT5, thereby preventing transcriptional elongation. Regulates the recruitment of the SKA complex to kinetochores. This Mus musculus (Mouse) protein is Serine/threonine-protein phosphatase 2A 65 kDa regulatory subunit A alpha isoform (Ppp2r1a).